Here is a 249-residue protein sequence, read N- to C-terminus: Probable transcriptional regulatory protein GOX1679 (249 aa).

It belongs to the TACO1 family.

Its subcellular location is the cytoplasm. The sequence is that of Probable transcriptional regulatory protein GOX1679 from Gluconobacter oxydans (strain 621H) (Gluconobacter suboxydans).